A 94-amino-acid chain; its full sequence is Large ribosomal subunit protein uL23 (94 aa).

This sequence belongs to the universal ribosomal protein uL23 family. Part of the 50S ribosomal subunit. Contacts protein L29, and trigger factor when it is bound to the ribosome.

Its function is as follows. One of the early assembly proteins it binds 23S rRNA. One of the proteins that surrounds the polypeptide exit tunnel on the outside of the ribosome. Forms the main docking site for trigger factor binding to the ribosome. This Pelobacter propionicus (strain DSM 2379 / NBRC 103807 / OttBd1) protein is Large ribosomal subunit protein uL23.